Reading from the N-terminus, the 388-residue chain is Na(+)/H(+) antiporter NhaA (388 aa).

The Cytoplasmic segment spans residues 1 to 11 (MKHLHRFFSSD). The chain crosses the membrane as a helical span at residues 12 to 31 (ASGGIILIIAAILAMIMANS). Residues 32 to 58 (GATSGWYHDFLETPVQLRVGSLEINKN) are Periplasmic-facing. A helical transmembrane segment spans residues 59 to 80 (MLLWINDALMAVFFLLVGLEVK). Residues 81–96 (RELMQGSLASLLQAAF) lie on the Cytoplasmic side of the membrane. The helical transmembrane segment at 97–116 (PVIAAIGGMIVPALLYLAFN) threads the bilayer. Residues 117 to 122 (YADPIT) are Periplasmic-facing. The chain crosses the membrane as a helical span at residues 123–130 (REGWAIPA). Residues 131–154 (ATDIAFALGVLALLGSRVPLVLKI) are Cytoplasmic-facing. Residues 155-176 (FLMALAIIDDLGAIIIIALFYT) traverse the membrane as a helical segment. Over 177 to 180 (NDLS) the chain is Periplasmic. The chain crosses the membrane as a helical span at residues 181–200 (MASLGVAAVAIAVLAVLNLC). Residues 201–204 (GVRR) are Cytoplasmic-facing. Residues 205 to 222 (TGVYILVGVVLWTAVLKS) form a helical membrane-spanning segment. A topological domain (periplasmic) is located at residue Gly223. Residues 224–236 (VHATLAGVIVGFF) form a helical membrane-spanning segment. The Cytoplasmic segment spans residues 237 to 253 (IPLKEKHGRSPAKRLEH). A helical membrane pass occupies residues 254-272 (VLHPWVAYLILPLFAFANA). Residues 273–286 (GVSLQGVTLDGLTS) are Periplasmic-facing. The chain crosses the membrane as a helical span at residues 287-310 (ILPLGIIAGLLIGKPLGISLFCWL). At 311 to 339 (ALRLKLAHLPEGTTYQQIMVVGILCGIGF) the chain is on the cytoplasmic side. Residues 340-350 (TMSIFIASLAF) form a helical membrane-spanning segment. The Periplasmic segment spans residues 351–357 (GSVDPEL). Residues 358–380 (INWAKLGILVGSISSAVIGYSWL) traverse the membrane as a helical segment. Over 381-388 (RVRLRPSV) the chain is Cytoplasmic.

Belongs to the NhaA Na(+)/H(+) (TC 2.A.33) antiporter family.

It is found in the cell inner membrane. The enzyme catalyses Na(+)(in) + 2 H(+)(out) = Na(+)(out) + 2 H(+)(in). Na(+)/H(+) antiporter that extrudes sodium in exchange for external protons. The polypeptide is Na(+)/H(+) antiporter NhaA (Shigella flexneri serotype 5b (strain 8401)).